Consider the following 558-residue polypeptide: Glutamine--tRNA ligase (558 aa).

The 'HIGH' region signature appears at Pro36–His46. Residues Glu37–Asn39 and His43–Ser49 each bind ATP. L-glutamine contacts are provided by Asp69 and Tyr214. Residues Thr233, Arg263–Leu264, and Leu271–Lys273 contribute to the ATP site. A 'KMSKS' region motif is present at residues Leu270–Arg274.

This sequence belongs to the class-I aminoacyl-tRNA synthetase family. As to quaternary structure, monomer.

It localises to the cytoplasm. The enzyme catalyses tRNA(Gln) + L-glutamine + ATP = L-glutaminyl-tRNA(Gln) + AMP + diphosphate. This chain is Glutamine--tRNA ligase, found in Nitrobacter hamburgensis (strain DSM 10229 / NCIMB 13809 / X14).